The sequence spans 24 residues: Chlorate reductase subunit beta (24 aa).

In terms of assembly, heterotrimer of alpha, beta and gamma subunits. It depends on [3Fe-4S] cluster as a cofactor. [4Fe-4S] cluster is required as a cofactor.

The protein resides in the cytoplasm. In terms of biological role, electron transfer subunit of the chlorate reductase. This is Chlorate reductase subunit beta from Stutzerimonas chloritidismutans (Pseudomonas chloritidismutans).